Here is a 104-residue protein sequence, read N- to C-terminus: ATP-dependent Clp protease adapter protein ClpS (104 aa).

The protein belongs to the ClpS family. Binds to the N-terminal domain of the chaperone ClpA.

Involved in the modulation of the specificity of the ClpAP-mediated ATP-dependent protein degradation. This is ATP-dependent Clp protease adapter protein ClpS from Paraburkholderia xenovorans (strain LB400).